A 205-amino-acid chain; its full sequence is MTCTIDKILQDAKTLLERLKDHDNAAESLIDQSSVLHKRVKAMKEVGTAMPEKYQEELAEIKDASKLRPHVLLCQENTQIRDLQLENKELWLSLEEHQYALELIMSKYRKQMLQLIANKIPAPTEPVLEAHKTFSSDLECQIDRICVIGDAMRKAIQLDEDQAYNIQERLAQLELENKELREILSVRNESLRSSKKESEWNFSEK.

2 coiled-coil regions span residues 4-32 (TIDK…LIDQ) and 154-192 (KAIQ…ESLR).

This sequence belongs to the SIKE family. As to quaternary structure, interacts with IKBKE and TBK1 via its coiled coil region. Interaction with TBK1 is disrupted upon viral infection or TLR3 stimulation. Interacts with CDC42BPB. Associates with the STRIPAK core complex composed of PP2A catalytic and scaffolding subunits, the striatins (PP2A regulatory subunits), the striatin-associated proteins MOB4, STRIP1 and STRIP2, PDCD10 and members of the STE20 kinases, such as STK24 and STK26.

It is found in the cytoplasm. Functionally, suppressor of IKK-epsilon. Associates with the striatin-interacting phosphatase and kinase (STRIPAK) core complex, forming the extended (SIKE1:SLMAP)STRIPAK complex. The (SIKE1:SLMAP)STRIPAK complex dephosphorylates STK3 leading to the inhibition of Hippo signaling and the control of cell growth. This chain is Suppressor of IKBKE 1 (sike1), found in Xenopus laevis (African clawed frog).